The sequence spans 535 residues: Ribonuclease Y (535 aa).

Residues 30-50 (IWALPALVIGLAIGAGIGILI) traverse the membrane as a helical segment. The 61-residue stretch at 225-285 (TVSTVALPSE…VRREVARLAL (61 aa)) folds into the KH domain. Positions 351–444 (VLQHSLECAL…VQAVDAISGG (94 aa)) constitute an HD domain.

This sequence belongs to the RNase Y family.

It localises to the cell membrane. Its function is as follows. Endoribonuclease that initiates mRNA decay. The sequence is that of Ribonuclease Y from Roseiflexus sp. (strain RS-1).